Consider the following 193-residue polypeptide: Inner membrane protein p54 (193 aa).

The chain crosses the membrane as a helical span at residues 32–52; sequence YTILIAIVVLVIIIIVLIYLF. Positions 84–126 are disordered; that stretch reads PQPGTSKPAGATTASVGKPVTGRPATNRPVTDRPATNNPVTDR. 4 tandem repeats follow at residues 135–138, 139–142, 143–146, and 147–150. A 4 X 4 AA tandem repeats of A-A-A-S region spans residues 135–150; it reads AAASAAASAAASAAAS. Positions 159–171 are interaction with host DYNLL1; that stretch reads YTTVTTQNTASQT.

The protein belongs to the asfivirus envelope protein p54 family. In terms of assembly, interacts with the host light chain cytoplasmic dynein DYNLL1; this interaction is critical for intracellular microtubule-dependent virus transport toward viral factories.

The protein localises to the virion membrane. The protein resides in the host cytoplasm. It is found in the host cytoskeleton. Its subcellular location is the host endoplasmic reticulum membrane. Its function is as follows. Inner envelope protein involved, through its interaction with host dynein, in the intracellular microtubule-dependent transport of viral capsid toward viral factories. Seems to induce caspase-3 activation and apoptosis. Plays a role in virion morphogenesis by recruiting and transforming the host ER membranes into the precursors of the viral envelope. Involved in virus attachment to the host cell. In Ornithodoros (relapsing fever ticks), this protein is Inner membrane protein p54.